The chain runs to 377 residues: Chaperone protein DnaJ (377 aa).

The J domain maps to 5 to 70 (DYYEVLGVSR…DKKAAYDQFG (66 aa)). The segment at 133 to 211 (GLTKELRIPT…CHGDGRVEKS (79 aa)) adopts a CR-type zinc-finger fold. Positions 146, 149, 163, 166, 185, 188, 199, and 202 each coordinate Zn(2+). CXXCXGXG motif repeat units follow at residues 146-153 (CDLCEGSG), 163-170 (CGTCHGQG), 185-192 (CPTCHGRG), and 199-206 (CSKCHGDG).

It belongs to the DnaJ family. In terms of assembly, homodimer. Zn(2+) serves as cofactor.

The protein resides in the cytoplasm. In terms of biological role, participates actively in the response to hyperosmotic and heat shock by preventing the aggregation of stress-denatured proteins and by disaggregating proteins, also in an autonomous, DnaK-independent fashion. Unfolded proteins bind initially to DnaJ; upon interaction with the DnaJ-bound protein, DnaK hydrolyzes its bound ATP, resulting in the formation of a stable complex. GrpE releases ADP from DnaK; ATP binding to DnaK triggers the release of the substrate protein, thus completing the reaction cycle. Several rounds of ATP-dependent interactions between DnaJ, DnaK and GrpE are required for fully efficient folding. Also involved, together with DnaK and GrpE, in the DNA replication of plasmids through activation of initiation proteins. The protein is Chaperone protein DnaJ of Shewanella baltica (strain OS195).